The chain runs to 162 residues: HTH-type transcriptional regulator IscR (162 aa).

Positions Arg-2 to Asn-131 constitute an HTH rrf2-type domain. The segment at residues Leu-28–Lys-51 is a DNA-binding region (H-T-H motif). [2Fe-2S] cluster-binding residues include Cys-92, Cys-98, and Cys-104.

Requires [2Fe-2S] cluster as cofactor.

Its function is as follows. Regulates the transcription of several operons and genes involved in the biogenesis of Fe-S clusters and Fe-S-containing proteins. The chain is HTH-type transcriptional regulator IscR from Shigella sonnei (strain Ss046).